Consider the following 77-residue polypeptide: Lantipeptide prochlorosin 4.3 (77 aa).

The propeptide occupies 1–64 (MSEEQLKAFI…DDELEGVAGG (64 aa)). Thr-65 is subject to 2,3-didehydrobutyrine. Residues 67–70 (SGGC) constitute a cross-link (lanthionine (Ser-Cys)). A cross-link (beta-methyllanthionine (Thr-Cys)) is located at residues 72–76 (TSMFC).

Cross-links are proved in vitro, when coepressed in E.coli with the ProcM lanthionine synthetase. In terms of processing, the lanthionine residue has both a DL configuration (with 2S,6R stereochemistry) and a LL configuration (with 2R,6R stereochemistry). DL and LL diastomers have a 4:1 ratio. It is unknown whether nonenzymatic cyclization occur, but authors favor a model in which ProcM does generate all thioether cross-links. The beta-methyllanthionine residue has a DL configuration (with 2S,3S,6R stereochemistry). Post-translationally, maturation of prochlorosin involves the enzymatic conversion of Thr, and Ser into dehydrated AA and the formation of thioether bonds with cysteines. This is followed by membrane translocation and cleavage of the modified precursor.

It localises to the secreted. Its function is as follows. Lanthionine-containing peptide (lantipeptide) with unknown function. Does not show antibiotic activity against Lactococcus lactis 117 and Bacillus subtilis 6633 bacteria. Organisms that produce this peptide live in oligotrophic environments at very dilute concentrations, suggesting this peptide is not secreted to influence other bacteria. The sequence is that of Lantipeptide prochlorosin 4.3 from Prochlorococcus marinus (strain MIT 9313).